We begin with the raw amino-acid sequence, 88 residues long: Homeobox protein knotted-1-like 2 (88 aa).

Residues 4 to 24 (ELKHELKQGYRDKLVDIREEI) form the ELK domain. A DNA-binding region (homeobox; TALE-type) is located at residues 25–88 (LRKRRAGKLP…NQRKRNWHNN (64 aa)).

It belongs to the TALE/KNOX homeobox family. In terms of tissue distribution, expressed in all tissues examined. Highest expression in leaves.

It localises to the nucleus. This chain is Homeobox protein knotted-1-like 2 (KNOX2), found in Zea mays (Maize).